We begin with the raw amino-acid sequence, 100 residues long: Large ribosomal subunit protein uL23 (100 aa).

This sequence belongs to the universal ribosomal protein uL23 family. As to quaternary structure, part of the 50S ribosomal subunit. Contacts protein L29, and trigger factor when it is bound to the ribosome.

In terms of biological role, one of the early assembly proteins it binds 23S rRNA. One of the proteins that surrounds the polypeptide exit tunnel on the outside of the ribosome. Forms the main docking site for trigger factor binding to the ribosome. In Parasynechococcus marenigrum (strain WH8102), this protein is Large ribosomal subunit protein uL23.